The following is a 390-amino-acid chain: EF-hand calcium-binding domain-containing protein 4A (390 aa).

Over residues 1–27 (MSPRSTLRSPLPSRTARSSASSDTPSP) the composition is skewed to low complexity. The disordered stretch occupies residues 1 to 37 (MSPRSTLRSPLPSRTARSSASSDTPSPGADRQDRMSK). EF-hand domains follow at residues 33–66 (DRMSKAKELFVLCDKEGKGFITKRDMQRLQQELP) and 67–102 (LSPEQLESVFESLDRDRNGYLTPLEFHTGLGELVGS). The Ca(2+) site is built by Asp-80, Asp-82, Asn-84, Tyr-86, and Glu-91. Residues 173-357 (SHLQDALKEK…DDKDAHQAQK (185 aa)) adopt a coiled-coil conformation. Residues 206-234 (DMESQLKEERERRQALDSMRQGDKKEQLL) form a disordered region.

It belongs to the EFCAB4 family.

The polypeptide is EF-hand calcium-binding domain-containing protein 4A (cracr2b) (Danio rerio (Zebrafish)).